The sequence spans 466 residues: 55 kDa erythrocyte membrane protein (466 aa).

Threonine 2 carries the N-acetylthreonine modification. Serine 19 carries the post-translational modification Phosphoserine. Position 49 is a phosphothreonine (threonine 49). A phosphoserine mark is found at serine 57 and serine 110. The PDZ domain occupies 71–152 (LIQFEKVTEE…MISLKVIPNQ (82 aa)). Residues 158 to 228 (ALQMFMRAQF…PSPELQEWRV (71 aa)) form the SH3 domain. Serine 243 is modified (phosphoserine). Positions 268 to 466 (VVSYEEVVRL…PQWVPVSWVY (199 aa)) are interaction with PALS1. The Guanylate kinase-like domain maps to 282–451 (RKTLVLIGAS…TLKTLQETFD (170 aa)).

Belongs to the MAGUK family. In terms of assembly, heterodimer with PALS1. Interacts with DLG5 and NF2. Interacts (via guanylate kinase-like domain) with WHRN (via third PDZ domain). Interacts with PALS1. In terms of processing, palmitoylated.

The protein localises to the cell membrane. Its subcellular location is the cell projection. It localises to the stereocilium. Its function is as follows. Essential regulator of neutrophil polarity. Regulates neutrophil polarization by regulating AKT1 phosphorylation through a mechanism that is independent of PIK3CG activity. In Bos taurus (Bovine), this protein is 55 kDa erythrocyte membrane protein (MPP1).